We begin with the raw amino-acid sequence, 88 residues long: Large ribosomal subunit protein bL27 (88 aa).

The interval Met-1–Arg-25 is disordered. Polar residues predominate over residues Ala-7 to Gln-19.

Belongs to the bacterial ribosomal protein bL27 family.

The protein is Large ribosomal subunit protein bL27 of Nocardia farcinica (strain IFM 10152).